The following is a 398-amino-acid chain: Probable sugar efflux transporter (398 aa).

Transmembrane regions (helical) follow at residues 15-35, 50-70, 81-101, 103-123, 136-156, 169-189, 209-229, 246-266, 275-295, 301-321, 333-353, and 364-384; these read VVTLAIAAFIFNTTEFVPVGL, VGIMLTIYAWVVALMSLPFML, LIGLFVLFIASHVLSFLAWNF, VLVISRIGIAFAHAIFWSITA, AQALSLLATGTALAMVLGLPI, TFFAIGLGALITLLCLIKLLP, PALMSIYLLTVVVVTAHYTAY, FATVLLLILGGAGIIGSVLFG, LLVSSAIGLLLACLLLLMPAA, LAILSIFWGVAIMIIGLGMQV, VAMSLFSGIFNIGIGAGALVG, and AIGYLGAIPALAALIWSILIF.

Belongs to the major facilitator superfamily. SotB (TC 2.A.1.2) family.

The protein resides in the cell inner membrane. In terms of biological role, involved in the efflux of sugars. The physiological role may be the reduction of the intracellular concentration of toxic sugars or sugar metabolites. This Enterobacter sp. (strain 638) protein is Probable sugar efflux transporter.